Here is a 486-residue protein sequence, read N- to C-terminus: Malonate-semialdehyde dehydrogenase (486 aa).

Residues F154, K178, E181, R182, and S231 each contribute to the NAD(+) site. C286 serves as the catalytic Nucleophile. E386 serves as a coordination point for NAD(+).

It belongs to the aldehyde dehydrogenase family. IolA subfamily. As to quaternary structure, homotetramer.

It carries out the reaction 3-oxopropanoate + NAD(+) + CoA + H2O = hydrogencarbonate + acetyl-CoA + NADH + H(+). The enzyme catalyses 2-methyl-3-oxopropanoate + NAD(+) + CoA + H2O = propanoyl-CoA + hydrogencarbonate + NADH + H(+). It participates in polyol metabolism; myo-inositol degradation into acetyl-CoA; acetyl-CoA from myo-inositol: step 7/7. Catalyzes the oxidation of malonate semialdehyde (MSA) and methylmalonate semialdehyde (MMSA) into acetyl-CoA and propanoyl-CoA, respectively. Is involved in a myo-inositol catabolic pathway. Bicarbonate, and not CO2, is the end-product of the enzymatic reaction. This chain is Malonate-semialdehyde dehydrogenase, found in Bacillus cereus (strain G9842).